The following is a 273-amino-acid chain: Aliphatic sulfonates import ATP-binding protein SsuB 2 (273 aa).

One can recognise an ABC transporter domain in the interval 17–241 (LLDLRITRKL…PRDRRDPTLA (225 aa)). Position 50–57 (50–57 (GPSGCGKS)) interacts with ATP.

It belongs to the ABC transporter superfamily. Aliphatic sulfonates importer (TC 3.A.1.17.2) family. The complex is composed of two ATP-binding proteins (SsuB), two transmembrane proteins (SsuC) and a solute-binding protein (SsuA).

The protein resides in the cell inner membrane. It catalyses the reaction ATP + H2O + aliphatic sulfonate-[sulfonate-binding protein]Side 1 = ADP + phosphate + aliphatic sulfonateSide 2 + [sulfonate-binding protein]Side 1.. In terms of biological role, part of the ABC transporter complex SsuABC involved in aliphatic sulfonates import. Responsible for energy coupling to the transport system. This Burkholderia lata (strain ATCC 17760 / DSM 23089 / LMG 22485 / NCIMB 9086 / R18194 / 383) protein is Aliphatic sulfonates import ATP-binding protein SsuB 2.